We begin with the raw amino-acid sequence, 631 residues long: Anthrax toxin receptor-like (631 aa).

The signal sequence occupies residues 1 to 27 (MGSHESLGPYFLVFLLLLLLPPPLFRA). Residues 28-353 (GSLRYHGPDW…TSTTCGIFRN (326 aa)) lie on the Extracellular side of the membrane. In terms of domain architecture, VWFA spans 76–246 (DLYFILDKSG…KALRSTIDAL (171 aa)). Positions 84, 86, and 150 each coordinate a divalent metal cation. Residues 354–374 (WLYFVPLLLLVPLLLCCVWRL) traverse the membrane as a helical segment. Over 375–631 (CRKQTVKEPP…LSLPPSEPNF (257 aa)) the chain is Cytoplasmic. Residues 382 to 413 (EPPPVQKPEKEPEQEKPPSPPPPPPPPPPPLP) are disordered. Residues 388-397 (KPEKEPEQEK) are compositionally biased toward basic and acidic residues. A compositionally biased stretch (pro residues) spans 398-413 (PPSPPPPPPPPPPPLP).

The protein belongs to the ATR family.

It is found in the membrane. This chain is Anthrax toxin receptor-like (ANTXRL), found in Homo sapiens (Human).